A 418-amino-acid polypeptide reads, in one-letter code: Dihydrofolate synthase/folylpolyglutamate synthase (418 aa).

Position 53–56 (53–56 (GKGT)) interacts with ATP. A Mg(2+)-binding site is contributed by S77. A 7,8-dihydropteroate-binding site is contributed by 116–119 (TYFE). A Mg(2+)-binding site is contributed by E140. Residue 147–149 (LDA) coordinates 7,8-dihydropteroate. A Mg(2+)-binding site is contributed by H167. Residues N252, R284, and D297 each contribute to the ATP site.

This sequence belongs to the folylpolyglutamate synthase family. Monomer. Mg(2+) is required as a cofactor.

The enzyme catalyses 7,8-dihydropteroate + L-glutamate + ATP = 7,8-dihydrofolate + ADP + phosphate + H(+). The catalysed reaction is (6S)-5,6,7,8-tetrahydrofolyl-(gamma-L-Glu)(n) + L-glutamate + ATP = (6S)-5,6,7,8-tetrahydrofolyl-(gamma-L-Glu)(n+1) + ADP + phosphate + H(+). It carries out the reaction 10-formyltetrahydrofolyl-(gamma-L-Glu)(n) + L-glutamate + ATP = 10-formyltetrahydrofolyl-(gamma-L-Glu)(n+1) + ADP + phosphate + H(+). It catalyses the reaction (6R)-5,10-methylenetetrahydrofolyl-(gamma-L-Glu)(n) + L-glutamate + ATP = (6R)-5,10-methylenetetrahydrofolyl-(gamma-L-Glu)(n+1) + ADP + phosphate + H(+). It functions in the pathway cofactor biosynthesis; tetrahydrofolate biosynthesis; 7,8-dihydrofolate from 2-amino-4-hydroxy-6-hydroxymethyl-7,8-dihydropteridine diphosphate and 4-aminobenzoate: step 2/2. It participates in cofactor biosynthesis; tetrahydrofolylpolyglutamate biosynthesis. In terms of biological role, functions in two distinct reactions of the de novo folate biosynthetic pathway. Catalyzes the addition of a glutamate residue to dihydropteroate (7,8-dihydropteroate or H2Pte) to form dihydrofolate (7,8-dihydrofolate monoglutamate or H2Pte-Glu). Also catalyzes successive additions of L-glutamate to tetrahydrofolate or 10-formyltetrahydrofolate or 5,10-methylenetetrahydrofolate, leading to folylpolyglutamate derivatives. This chain is Dihydrofolate synthase/folylpolyglutamate synthase (folC), found in Buchnera aphidicola subsp. Schizaphis graminum (strain Sg).